A 148-amino-acid polypeptide reads, in one-letter code: Putative pre-16S rRNA nuclease (148 aa).

Belongs to the YqgF nuclease family.

The protein localises to the cytoplasm. Could be a nuclease involved in processing of the 5'-end of pre-16S rRNA. This chain is Putative pre-16S rRNA nuclease, found in Colwellia psychrerythraea (strain 34H / ATCC BAA-681) (Vibrio psychroerythus).